The chain runs to 49 residues: Large ribosomal subunit protein eL40 (49 aa).

Belongs to the eukaryotic ribosomal protein eL40 family.

This is Large ribosomal subunit protein eL40 from Methanococcoides burtonii (strain DSM 6242 / NBRC 107633 / OCM 468 / ACE-M).